A 441-amino-acid chain; its full sequence is Phosphoribosylamine--glycine ligase (441 aa).

The ATP-grasp domain occupies 112 to 319 (RNFMKKYGIE…FTEIMSAVVK (208 aa)). Residue 139-196 (IEKLGDVAVKPSGLTGGKGVKVMGDQLPDLKAAKDYTSELLEKGPVVIEERFIGEEFT) coordinates ATP. Mg(2+)-binding residues include glutamine 277, glutamate 289, and asparagine 291. Mn(2+) is bound by residues glutamine 277, glutamate 289, and asparagine 291.

The protein belongs to the GARS family. It depends on Mg(2+) as a cofactor. Mn(2+) is required as a cofactor.

It carries out the reaction 5-phospho-beta-D-ribosylamine + glycine + ATP = N(1)-(5-phospho-beta-D-ribosyl)glycinamide + ADP + phosphate + H(+). It functions in the pathway purine metabolism; IMP biosynthesis via de novo pathway; N(1)-(5-phospho-D-ribosyl)glycinamide from 5-phospho-alpha-D-ribose 1-diphosphate: step 2/2. This is Phosphoribosylamine--glycine ligase from Methanosarcina acetivorans (strain ATCC 35395 / DSM 2834 / JCM 12185 / C2A).